Reading from the N-terminus, the 271-residue chain is Cyclase-like protein 3 (271 aa).

Positions 1–21 are cleaved as a signal peptide; it reads MYHLLIIITTLSFSSINITFA.

It belongs to the Cyclase 1 superfamily.

It localises to the secreted. The protein localises to the extracellular space. The protein resides in the extracellular matrix. The protein is Cyclase-like protein 3 of Arabidopsis thaliana (Mouse-ear cress).